A 483-amino-acid chain; its full sequence is SWI/SNF-related matrix-associated actin-dependent regulator of chromatin subfamily D member 3 (483 aa).

A2 carries the N-acetylalanine modification. Residues 27-102 (RPGMPSGARM…ARSRSAKRRK (76 aa)) form a disordered region. Over residues 78-88 (QSQAQGQGQPV) the composition is skewed to low complexity. S178 is modified (phosphoserine). The region spanning 258–335 (YQPPQFKLDP…PQRLTALLLP (78 aa)) is the SWIB/MDM2 domain.

The protein belongs to the SMARCD family. As to quaternary structure, component of the multiprotein chromatin-remodeling complexes SWI/SNF: SWI/SNF-A (BAF), SWI/SNF-B (PBAF) and related complexes. The canonical complex contains a catalytic subunit (either SMARCA4/BRG1/BAF190A or SMARCA2/BRM/BAF190B) and at least SMARCE1, ACTL6A/BAF53, SMARCC1/BAF155, SMARCC2/BAF170, and SMARCB1/SNF5/BAF47. Other subunits specific to each of the complexes may also be present permitting several possible combinations developmentally and tissue specific. Component of the BAF complex, which includes at least actin (ACTB), ARID1A/BAF250A, ARID1B/BAF250B, SMARCA2/BRM, SMARCA4/BRG1/BAF190A, ACTL6A/BAF53, ACTL6B/BAF53B, SMARCE1/BAF57, SMARCC1/BAF155, SMARCC2/BAF170, SMARCB1/SNF5/INI1, and one or more SMARCD1/BAF60A, SMARCD2/BAF60B, or SMARCD3/BAF60C. In muscle cells, the BAF complex also contains DPF3. Component of neural progenitors-specific chromatin remodeling complex (npBAF complex) composed of at least, ARID1A/BAF250A or ARID1B/BAF250B, SMARCD1/BAF60A, SMARCD3/BAF60C, SMARCA2/BRM/BAF190B, SMARCA4/BRG1/BAF190A, SMARCB1/BAF47, SMARCC1/BAF155, SMARCE1/BAF57, SMARCC2/BAF170, PHF10/BAF45A, ACTL6A/BAF53A and actin. Component of neuron-specific chromatin remodeling complex (nBAF complex) composed of at least, ARID1A/BAF250A or ARID1B/BAF250B, SMARCD1/BAF60A, SMARCD3/BAF60C, SMARCA2/BRM/BAF190B, SMARCA4/BRG1/BAF190A, SMARCB1/BAF47, SMARCC1/BAF155, SMARCE1/BAF57, SMARCC2/BAF170, DPF1/BAF45B, DPF3/BAF45C, ACTL6B/BAF53B and actin. May be a component of the SWI/SNF-B (PBAF) chromatin remodeling complex, at least composed of SMARCA4/BRG1, SMARCB1/BAF47/SNF5, ACTL6A/BAF53A or ACTL6B/BAF53B, SMARCE1/BAF57, SMARCD1/BAF60A, SMARCD2/BAF60B, perhaps SMARCD3/BAF60C, SMARCC1/BAF155, SMARCC2/BAF170, PBRM1/BAF180, ARID2/BAF200 and actin. Component of SWI/SNF (GBAF) subcomplex, which includes at least BICRA or BICRAL (mutually exclusive), BRD9, SS18, SMARCA2/BRM, SMARCA4/BRG1/BAF190A, ACTL6A/BAF53, SMARCC1/BAF155, and SMARCD1/BAF60A. Interacts with SMARCA4/BRG1/BAF190A. The precise distribution of the related SMARCD1, SMARCD2 and SMARCD3 proteins among these and other SWI/SNF nucleosome-remodeling complexes is not fully known. May allow recruitment of SWI/SNF containing complexes specifically to promoters where these factors are located. Also interacts with several nuclear receptors including PPARG/NR1C3, RXRA/NR1F1, ESR1, NR5A1, NR5A2/LRH1 and other transcriptional activators including the HLH protein SREBF1/SREBP1 and the homeobox protein PBX1. Interacts with PRDM1/BLIMP1. As to expression, ubiquitously expressed.

It localises to the nucleus. Its function is as follows. Involved in transcriptional activation and repression of select genes by chromatin remodeling (alteration of DNA-nucleosome topology). Component of SWI/SNF chromatin remodeling complexes that carry out key enzymatic activities, changing chromatin structure by altering DNA-histone contacts within a nucleosome in an ATP-dependent manner. Stimulates nuclear receptor mediated transcription. Belongs to the neural progenitors-specific chromatin remodeling complex (npBAF complex) and the neuron-specific chromatin remodeling complex (nBAF complex). During neural development a switch from a stem/progenitor to a postmitotic chromatin remodeling mechanism occurs as neurons exit the cell cycle and become committed to their adult state. The transition from proliferating neural stem/progenitor cells to postmitotic neurons requires a switch in subunit composition of the npBAF and nBAF complexes. As neural progenitors exit mitosis and differentiate into neurons, npBAF complexes which contain ACTL6A/BAF53A and PHF10/BAF45A, are exchanged for homologous alternative ACTL6B/BAF53B and DPF1/BAF45B or DPF3/BAF45C subunits in neuron-specific complexes (nBAF). The npBAF complex is essential for the self-renewal/proliferative capacity of the multipotent neural stem cells. The nBAF complex along with CREST plays a role regulating the activity of genes essential for dendrite growth. The sequence is that of SWI/SNF-related matrix-associated actin-dependent regulator of chromatin subfamily D member 3 (Smarcd3) from Mus musculus (Mouse).